Consider the following 221-residue polypeptide: Urease accessory protein UreF (221 aa).

It belongs to the UreF family. UreD, UreF and UreG form a complex that acts as a GTP-hydrolysis-dependent molecular chaperone, activating the urease apoprotein by helping to assemble the nickel containing metallocenter of UreC. The UreE protein probably delivers the nickel.

The protein localises to the cytoplasm. Its function is as follows. Required for maturation of urease via the functional incorporation of the urease nickel metallocenter. This is Urease accessory protein UreF from Vibrio parahaemolyticus.